A 515-amino-acid polypeptide reads, in one-letter code: Galactose/methyl galactoside import ATP-binding protein MglA (515 aa).

2 consecutive ABC transporter domains span residues 8 to 243 (LEMR…VGRE) and 254 to 499 (IPKE…AKYL). 40 to 47 (GENGAGKS) is an ATP binding site.

Belongs to the ABC transporter superfamily. Galactose/methyl galactoside importer (TC 3.A.1.2.3) family. As to quaternary structure, the complex is composed of one ATP-binding protein (MglA), two transmembrane proteins (MglC) and a solute-binding protein (MglB).

The protein resides in the cell membrane. The catalysed reaction is D-galactose(out) + ATP + H2O = D-galactose(in) + ADP + phosphate + H(+). It carries out the reaction methyl beta-D-galactoside(out) + ATP + H2O = methyl beta-D-galactoside(in) + ADP + phosphate + H(+). Its function is as follows. Part of the ABC transporter complex MglABC involved in galactose/methyl galactoside import. Responsible for energy coupling to the transport system. The chain is Galactose/methyl galactoside import ATP-binding protein MglA from Clostridium perfringens (strain ATCC 13124 / DSM 756 / JCM 1290 / NCIMB 6125 / NCTC 8237 / Type A).